A 280-amino-acid polypeptide reads, in one-letter code: uncharacterized protein (280 aa).

It belongs to the metallo-dependent hydrolases superfamily.

This is an uncharacterized protein from Methanocaldococcus jannaschii (strain ATCC 43067 / DSM 2661 / JAL-1 / JCM 10045 / NBRC 100440) (Methanococcus jannaschii).